A 200-amino-acid chain; its full sequence is Early E1A 21 kDa protein (200 aa).

Positions 78-98 are disordered; that stretch reads QDSTTATSAEEPSASTDSISS. The short motif at 114 to 118 is the LXCXE motif, interaction with host RB1 element; it reads LRCYE. A zinc finger lies at 136 to 151; it reads CSTCGGHEVNGFCSLC. The short motif at 196-200 is the Nuclear localization signal element; sequence SRHDE.

As to quaternary structure, interaction with host RB1 induces the aberrant dissociation of RB1-E2F1 complex thereby disrupting RB1's activity.

Functionally, E1A protein has both transforming and trans-activating activities. Plays a role in viral genome replication by driving entry of quiescent cells into the cell cycle. Disrupts the function of host retinoblastoma protein RB1/pRb and isoform early E1A 26 kDa protein stabilizes TP53, which are key regulators of the cell cycle. Induces the disassembly of the E2F1 transcription factors from RB1 by direct competition for the same binding site on RB1, with subsequent transcriptional activation of E2F1-regulated S-phase genes. Inactivation of the ability of RB1 to arrest the cell cycle is critical for cellular transformation, uncontrolled cellular growth and proliferation induced by viral infection. Stimulation of progression from G1 to S phase allows the virus to efficiently use the cellular DNA replicating machinery to achieve viral genome replication. This is Early E1A 21 kDa protein from Murine adenovirus A serotype 1 (MAdV-1).